The following is a 447-amino-acid chain: MGKEKVHINIVVIGHVDSGKSTTTGHLIYKLGGIDKRVIERFEKEAAEMNKRSFKYAWVLDKLKAERERGITIDIALWKFETSKYYCTVIDAPGHRDFIKNMITGTSQADCAVLIIDSTTGGFEAGISKDGQTREHALLAFTLGVKQMICCCNKMDATTPKYSKGRYEEIVKEVSSYLKKVGYNPDKIPFVPISGFEGDNMIERSTNLDWYKGPTLLDALDNINEPKRPSDKPLRLPLQDVYKIGGIGIVPVGRVETGVVKPGMLVTFAPTGLTTEVKSVEMHHEALTEALPGDNVGFNVKNVAVKDLKRGFVASNSKDDPAKEAANFTSQVIIMNHPGQIGNGYAPVLDCHTSHIAVKFAELITKIDRRSGKEIEKEPKFLKNGDAGMVKMIPTKPMVVETFAEYPPLGRFAVRDMRQTVAVGVIKSVEKKDPTGAKVTKAAAKKK.

A tr-type G domain is found at 5-230 (KVHINIVVIG…DNINEPKRPS (226 aa)). The interval 14–21 (GHVDSGKS) is G1. 14 to 21 (GHVDSGKS) contacts GTP. Lys55 carries the post-translational modification N6,N6-dimethyllysine. The G2 stretch occupies residues 70 to 74 (GITID). N6,N6,N6-trimethyllysine is present on Lys79. Residues 91–94 (DAPG) form a G3 region. GTP is bound by residues 91–95 (DAPGH) and 153–156 (NKMD). Residues 153 to 156 (NKMD) are G4. Position 187 is an N6,N6,N6-trimethyllysine (Lys187). Residues 194-196 (SGF) form a G5 region. Lys261 bears the N6-methyllysine mark. Glu289 is subject to 5-glutamyl glycerylphosphorylethanolamine. Lys306 is modified (N6,N6,N6-trimethyllysine). 5-glutamyl glycerylphosphorylethanolamine is present on Glu362. An N6,N6,N6-trimethyllysine modification is found at Lys396.

It belongs to the TRAFAC class translation factor GTPase superfamily. Classic translation factor GTPase family. EF-Tu/EF-1A subfamily.

Its subcellular location is the cytoplasm. In terms of biological role, this protein promotes the GTP-dependent binding of aminoacyl-tRNA to the A-site of ribosomes during protein biosynthesis. The chain is Elongation factor 1-alpha from Vicia faba (Broad bean).